Here is an 85-residue protein sequence, read N- to C-terminus: Large ribosomal subunit protein bL27 (85 aa).

Residues 1–10 (MAQKKGGGST) show a composition bias toward gly residues. The disordered stretch occupies residues 1-20 (MAQKKGGGSTRNGRDSKPKM).

Belongs to the bacterial ribosomal protein bL27 family.

The polypeptide is Large ribosomal subunit protein bL27 (Delftia acidovorans (strain DSM 14801 / SPH-1)).